Consider the following 217-residue polypeptide: Imidazole glycerol phosphate synthase subunit HisH (217 aa).

Residues 3 to 217 (TIAIVDYGMG…IYRNFVHWKP (215 aa)) form the Glutamine amidotransferase type-1 domain. The active-site Nucleophile is Cys82. Active-site residues include His197 and Glu199.

As to quaternary structure, heterodimer of HisH and HisF.

Its subcellular location is the cytoplasm. It catalyses the reaction 5-[(5-phospho-1-deoxy-D-ribulos-1-ylimino)methylamino]-1-(5-phospho-beta-D-ribosyl)imidazole-4-carboxamide + L-glutamine = D-erythro-1-(imidazol-4-yl)glycerol 3-phosphate + 5-amino-1-(5-phospho-beta-D-ribosyl)imidazole-4-carboxamide + L-glutamate + H(+). The enzyme catalyses L-glutamine + H2O = L-glutamate + NH4(+). It functions in the pathway amino-acid biosynthesis; L-histidine biosynthesis; L-histidine from 5-phospho-alpha-D-ribose 1-diphosphate: step 5/9. Its function is as follows. IGPS catalyzes the conversion of PRFAR and glutamine to IGP, AICAR and glutamate. The HisH subunit catalyzes the hydrolysis of glutamine to glutamate and ammonia as part of the synthesis of IGP and AICAR. The resulting ammonia molecule is channeled to the active site of HisF. The polypeptide is Imidazole glycerol phosphate synthase subunit HisH (Ralstonia nicotianae (strain ATCC BAA-1114 / GMI1000) (Ralstonia solanacearum)).